The following is a 657-amino-acid chain: MTQLAIGKPAPLGAHYDGQGVNFTLFSAHAERVELCVFDANGQEHRYDLPGHSGDIWHGYLPDARPGLRYGYRVHGPWQPAEGHRFNPAKLLIDPCARQIEGEFKDNPLLHAGHNEPDYRDNAAIAPKCVVVVDHYDWEDDAPPRTPWGSTIIYEAHVKGLTYLHPEIPVEIRGTYKALGHPVMINYLKQLGITALELLPVAQFASEPRLQRMGLSNYWGYNPVAMFALHPAYACSPETALDEFRDAIKALHKAGIEVILDIVLNHSAELDLDGPLFSLRGIDNRSYYWIREDGDYHNWTGCGNTLNLSHPAVVDYASACLRYWVETCHVDGFRFDLAAVMGRTPEFRQDAPLFTAIQNCPVLSQVKLIAEPWDIAPGGYQVGNFPPLFAEWNDHFRDAARRFWLHYDLPLGAFAGRFAASSDVFKRNGRLPSAAINLVTAHDGFTLRDCVCFNHKHNEANGEENRDGTNNNYSNNHGKEGLGGSLDLVERRRDSIHALLTTLLLSQGTPMLLAGDEHGHSQHGNNNAYCQDNQLTWLDWSQASSGLTAFTAALIHLRKRIPALVENRWWEEGDGNVRWLNRYAQPLSTDEWQNGPKQLQILLSDRFLIAINATLEVTEIVLPAGEWHAIPPFAGEDNPVITAVWQGPAHGLCVFQR.

D336 functions as the Nucleophile in the catalytic mechanism. Catalysis depends on E371, which acts as the Proton donor. The segment covering 458–467 (NEANGEENRD) has biased composition (basic and acidic residues). The interval 458-479 (NEANGEENRDGTNNNYSNNHGK) is disordered.

The protein belongs to the glycosyl hydrolase 13 family.

It carries out the reaction Hydrolysis of (1-&gt;6)-alpha-D-glucosidic linkages to branches with degrees of polymerization of three or four glucose residues in limit dextrin.. Its pathway is glycan degradation; glycogen degradation. Its function is as follows. Removes maltotriose and maltotetraose chains that are attached by 1,6-alpha-linkage to the limit dextrin main chain, generating a debranched limit dextrin. In Escherichia coli (strain 55989 / EAEC), this protein is Glycogen debranching enzyme.